Here is a 153-residue protein sequence, read N- to C-terminus: MRKDMLLEKVEVLVKPIVEELSYELYYLEYVKENGEYYLRIYIDKEEDSISLNDCEKVSRRVSEILDVEDPIEDSYYLEVSSPGLNRGLYKEEHFKKFIGREVLVRFNGSLEGMKKIQGILKEAENEFITVEGEKELKIPTEKIKGANLEGEI.

This sequence belongs to the RimP family.

The protein localises to the cytoplasm. Required for maturation of 30S ribosomal subunits. This chain is Ribosome maturation factor RimP, found in Clostridium botulinum (strain Alaska E43 / Type E3).